The chain runs to 136 residues: D-ribose pyranase (136 aa).

Catalysis depends on His20, which acts as the Proton donor. Substrate contacts are provided by residues Asp28, His98, and 120–122 (YAN).

Belongs to the RbsD / FucU family. RbsD subfamily. As to quaternary structure, homodecamer.

The protein resides in the cytoplasm. It carries out the reaction beta-D-ribopyranose = beta-D-ribofuranose. It participates in carbohydrate metabolism; D-ribose degradation; D-ribose 5-phosphate from beta-D-ribopyranose: step 1/2. In terms of biological role, catalyzes the interconversion of beta-pyran and beta-furan forms of D-ribose. In Geobacillus kaustophilus (strain HTA426), this protein is D-ribose pyranase.